The following is a 481-amino-acid chain: 2-succinylbenzoate--CoA ligase (481 aa).

The protein belongs to the ATP-dependent AMP-binding enzyme family. MenE subfamily.

It carries out the reaction 2-succinylbenzoate + ATP + CoA = 2-succinylbenzoyl-CoA + AMP + diphosphate. It participates in quinol/quinone metabolism; 1,4-dihydroxy-2-naphthoate biosynthesis; 1,4-dihydroxy-2-naphthoate from chorismate: step 5/7. Its pathway is quinol/quinone metabolism; menaquinone biosynthesis. Functionally, converts 2-succinylbenzoate (OSB) to 2-succinylbenzoyl-CoA (OSB-CoA). The polypeptide is 2-succinylbenzoate--CoA ligase (Bacillus cereus (strain ATCC 10987 / NRS 248)).